An 863-amino-acid chain; its full sequence is NACHT, LRR and PYD domains-containing protein 4B (863 aa).

The Pyrin domain occupies 1 to 93 (MASLFSDFGF…TNRATGEIAA (93 aa)). The NACHT domain maps to 143 to 466 (KMVVLQGVAG…FYLLHSEMDH (324 aa)). Residue 149 to 156 (GVAGIGKT) coordinates ATP. LRR repeat units lie at residues 618 to 643 (WHQI…IFNE), 683 to 706 (SYNL…MLCD), 717 to 740 (ILDL…LRQN), 741 to 763 (KSLR…ALCR), 765 to 782 (LTLP…ACQL), 797 to 824 (YKCL…AMKD), and 843 to 863 (SQEF…ENGV).

The protein belongs to the NLRP family.

In terms of biological role, may be involved in inflammation and recognition of cytosolic pathogen-associated molecular patterns (PAMPs) not intercepted by membrane-bound receptors. This chain is NACHT, LRR and PYD domains-containing protein 4B (Nlrp4b), found in Mus musculus (Mouse).